We begin with the raw amino-acid sequence, 216 residues long: uncharacterized protein (216 aa).

A helical membrane pass occupies residues 39-59 (VLPLTFIGSLLILILTIVYYF). Positions 59–108 (FTLSGSVNELKNEISKEKSKKERLLSEIKRLEELKKTLETKKAIYEVVKI) form a coiled coil.

It localises to the membrane. This is an uncharacterized protein from Aquifex aeolicus (strain VF5).